The sequence spans 516 residues: Cytochrome P450 1A2 (516 aa).

O-linked (GlcNAc) serine glycosylation is present at Ser69. Phe226 lines the substrate pocket. Position 458 (Cys458) interacts with heme.

Belongs to the cytochrome P450 family. In terms of assembly, interacts with PGRMC1; the interaction requires PGRMC1 homodimerization. Heme serves as cofactor.

Its subcellular location is the endoplasmic reticulum membrane. The protein resides in the microsome membrane. The enzyme catalyses an organic molecule + reduced [NADPH--hemoprotein reductase] + O2 = an alcohol + oxidized [NADPH--hemoprotein reductase] + H2O + H(+). It carries out the reaction 17beta-estradiol + reduced [NADPH--hemoprotein reductase] + O2 = 2-hydroxy-17beta-estradiol + oxidized [NADPH--hemoprotein reductase] + H2O + H(+). The catalysed reaction is 17beta-estradiol + reduced [NADPH--hemoprotein reductase] + O2 = 4-hydroxy-17beta-estradiol + oxidized [NADPH--hemoprotein reductase] + H2O + H(+). It catalyses the reaction estrone + reduced [NADPH--hemoprotein reductase] + O2 = 2-hydroxyestrone + oxidized [NADPH--hemoprotein reductase] + H2O + H(+). The enzyme catalyses estrone + reduced [NADPH--hemoprotein reductase] + O2 = 4-hydroxyestrone + oxidized [NADPH--hemoprotein reductase] + H2O + H(+). It carries out the reaction cholesterol + reduced [NADPH--hemoprotein reductase] + O2 = 25-hydroxycholesterol + oxidized [NADPH--hemoprotein reductase] + H2O + H(+). The catalysed reaction is all-trans-retinol + reduced [NADPH--hemoprotein reductase] + O2 = all-trans-retinal + oxidized [NADPH--hemoprotein reductase] + 2 H2O + H(+). It catalyses the reaction all-trans-retinal + reduced [NADPH--hemoprotein reductase] + O2 = all-trans-retinoate + oxidized [NADPH--hemoprotein reductase] + H2O + 2 H(+). The enzyme catalyses (5Z,8Z,11Z,14Z)-eicosatetraenoate + reduced [NADPH--hemoprotein reductase] + O2 = (14R,15S)-epoxy-(5Z,8Z,11Z)-eicosatrienoate + oxidized [NADPH--hemoprotein reductase] + H2O + H(+). It carries out the reaction (5Z,8Z,11Z,14Z)-eicosatetraenoate + reduced [NADPH--hemoprotein reductase] + O2 = (14S,15R)-epoxy-(5Z,8Z,11Z)-eicosatrienoate + oxidized [NADPH--hemoprotein reductase] + H2O + H(+). The catalysed reaction is (5Z,8Z,11Z,14Z,17Z)-eicosapentaenoate + reduced [NADPH--hemoprotein reductase] + O2 = (17R,18S)-epoxy-(5Z,8Z,11Z,14Z)-eicosatetraenoate + oxidized [NADPH--hemoprotein reductase] + H2O + H(+). It catalyses the reaction (4Z,7Z,10Z,13Z,16Z,19Z)-docosahexaenoate + reduced [NADPH--hemoprotein reductase] + O2 = (19R,20S)-epoxy-(4Z,7Z,10Z,13Z,16Z)-docosapentaenoate + oxidized [NADPH--hemoprotein reductase] + H2O + H(+). The enzyme catalyses (5S)-hydroperoxy-(6E,8Z,11Z,14Z)-eicosatetraenoate = 5-oxo-(6E,8Z,11Z,14Z)-eicosatetraenoate + H2O. It carries out the reaction (12S)-hydroperoxy-(5Z,8Z,10E,14Z)-eicosatetraenoate = 12-oxo-(5Z,8Z,10E,14Z)-eicosatetraenoate + H2O. The catalysed reaction is (15S)-hydroperoxy-(5Z,8Z,11Z,13E)-eicosatetraenoate = 15-oxo-(5Z,8Z,11Z,13E)-eicosatetraenoate + H2O. It catalyses the reaction (13S)-hydroperoxy-(9Z,11E)-octadecadienoate = 13-oxo-(9Z,11E)-octadecadienoate + H2O. The enzyme catalyses (5Z,8Z,11Z,14Z)-eicosatetraenoate + reduced [NADPH--hemoprotein reductase] + O2 = 13-hydroxy-(5Z,8Z,11Z,14Z)-eicosatetraenoate + oxidized [NADPH--hemoprotein reductase] + H2O + H(+). It carries out the reaction (5Z,8Z,11Z,14Z)-eicosatetraenoate + reduced [NADPH--hemoprotein reductase] + O2 = 19-hydroxy-(5Z,8Z,11Z,14Z)-eicosatetraenoate + oxidized [NADPH--hemoprotein reductase] + H2O + H(+). The catalysed reaction is (9Z,12Z)-octadecadienoate + reduced [NADPH--hemoprotein reductase] + O2 = 11-hydroxy-(9Z,12Z)-octadecadienoate + oxidized [NADPH--hemoprotein reductase] + H2O + H(+). Its pathway is cofactor metabolism; retinol metabolism. The protein operates within steroid metabolism; cholesterol metabolism. It functions in the pathway lipid metabolism; arachidonate metabolism. Functionally, a cytochrome P450 monooxygenase involved in the metabolism of various endogenous substrates, including fatty acids, steroid hormones and vitamins. Mechanistically, uses molecular oxygen inserting one oxygen atom into a substrate, and reducing the second into a water molecule, with two electrons provided by NADPH via cytochrome P450 reductase (NADPH--hemoprotein reductase). Catalyzes the hydroxylation of carbon-hydrogen bonds. Exhibits high catalytic activity for the formation of hydroxyestrogens from estrone (E1) and 17beta-estradiol (E2), namely 2-hydroxy E1 and E2. Metabolizes cholesterol toward 25-hydroxycholesterol, a physiological regulator of cellular cholesterol homeostasis. May act as a major enzyme for all-trans retinoic acid biosynthesis in the liver. Catalyzes two successive oxidative transformation of all-trans retinol to all-trans retinal and then to the active form all-trans retinoic acid. Primarily catalyzes stereoselective epoxidation of the last double bond of polyunsaturated fatty acids (PUFA), displaying a strong preference for the (R,S) stereoisomer. Catalyzes bisallylic hydroxylation and omega-1 hydroxylation of PUFA. May also participate in eicosanoids metabolism by converting hydroperoxide species into oxo metabolites (lipoxygenase-like reaction, NADPH-independent). Plays a role in the oxidative metabolism of xenobiotics. Catalyzes the N-hydroxylation of heterocyclic amines and the O-deethylation of phenacetin. Metabolizes caffeine via N3-demethylation. The polypeptide is Cytochrome P450 1A2 (CYP1A2) (Pongo abelii (Sumatran orangutan)).